Reading from the N-terminus, the 310-residue chain is tRNA-cytidine(32) 2-sulfurtransferase (310 aa).

The PP-loop motif motif lies at 45–50 (SGGKDS). [4Fe-4S] cluster-binding residues include Cys-120, Cys-123, and Cys-211.

Belongs to the TtcA family. In terms of assembly, homodimer. The cofactor is Mg(2+). Requires [4Fe-4S] cluster as cofactor.

The protein localises to the cytoplasm. It carries out the reaction cytidine(32) in tRNA + S-sulfanyl-L-cysteinyl-[cysteine desulfurase] + AH2 + ATP = 2-thiocytidine(32) in tRNA + L-cysteinyl-[cysteine desulfurase] + A + AMP + diphosphate + H(+). It functions in the pathway tRNA modification. Catalyzes the ATP-dependent 2-thiolation of cytidine in position 32 of tRNA, to form 2-thiocytidine (s(2)C32). The sulfur atoms are provided by the cysteine/cysteine desulfurase (IscS) system. In Shewanella baltica (strain OS185), this protein is tRNA-cytidine(32) 2-sulfurtransferase.